A 529-amino-acid polypeptide reads, in one-letter code: Bifunctional purine biosynthesis protein PurH (529 aa).

Residues 2–149 enclose the MGS-like domain; sequence TNLVPVGRAL…KNHRFVNVVT (148 aa).

This sequence belongs to the PurH family.

It catalyses the reaction (6R)-10-formyltetrahydrofolate + 5-amino-1-(5-phospho-beta-D-ribosyl)imidazole-4-carboxamide = 5-formamido-1-(5-phospho-D-ribosyl)imidazole-4-carboxamide + (6S)-5,6,7,8-tetrahydrofolate. The enzyme catalyses IMP + H2O = 5-formamido-1-(5-phospho-D-ribosyl)imidazole-4-carboxamide. It functions in the pathway purine metabolism; IMP biosynthesis via de novo pathway; 5-formamido-1-(5-phospho-D-ribosyl)imidazole-4-carboxamide from 5-amino-1-(5-phospho-D-ribosyl)imidazole-4-carboxamide (10-formyl THF route): step 1/1. Its pathway is purine metabolism; IMP biosynthesis via de novo pathway; IMP from 5-formamido-1-(5-phospho-D-ribosyl)imidazole-4-carboxamide: step 1/1. This chain is Bifunctional purine biosynthesis protein PurH, found in Cereibacter sphaeroides (strain ATCC 17029 / ATH 2.4.9) (Rhodobacter sphaeroides).